The sequence spans 183 residues: Ribosome rescue factor SmrB (183 aa).

The region spanning 98–173 is the Smr domain; the sequence is LDLHGLTQLQ…GDAALLVLIE (76 aa).

This sequence belongs to the SmrB family. Associates with collided ribosomes, but not with correctly translating polysomes.

Its function is as follows. Acts as a ribosome collision sensor. Detects stalled/collided disomes (pairs of ribosomes where the leading ribosome is stalled and a second ribosome has collided with it) and endonucleolytically cleaves mRNA at the 5' boundary of the stalled ribosome. Stalled/collided disomes form a new interface (primarily via the 30S subunits) that binds SmrB. Cleaved mRNA becomes available for tmRNA ligation, leading to ribosomal subunit dissociation and rescue of stalled ribosomes. In Shigella dysenteriae serotype 1 (strain Sd197), this protein is Ribosome rescue factor SmrB.